We begin with the raw amino-acid sequence, 929 residues long: Alanine--tRNA ligase (929 aa).

Zn(2+) is bound by residues H619, H623, C722, and H726.

Belongs to the class-II aminoacyl-tRNA synthetase family. Requires Zn(2+) as cofactor.

The protein resides in the cytoplasm. It carries out the reaction tRNA(Ala) + L-alanine + ATP = L-alanyl-tRNA(Ala) + AMP + diphosphate. Catalyzes the attachment of alanine to tRNA(Ala) in a two-step reaction: alanine is first activated by ATP to form Ala-AMP and then transferred to the acceptor end of tRNA(Ala). Also edits incorrectly charged Ser-tRNA(Ala) and Gly-tRNA(Ala) via its editing domain. This chain is Alanine--tRNA ligase, found in Halobacterium salinarum (strain ATCC 29341 / DSM 671 / R1).